Here is a 363-residue protein sequence, read N- to C-terminus: 3-dehydroquinate synthase (363 aa).

NAD(+) contacts are provided by residues 75–80 (DAEEGK), 109–113 (GAVTD), 133–134 (TS), K146, K155, and 173–176 (TLQT). Residues E188, H251, and H267 each coordinate Zn(2+).

The protein belongs to the sugar phosphate cyclases superfamily. Dehydroquinate synthase family. Co(2+) is required as a cofactor. Requires Zn(2+) as cofactor. It depends on NAD(+) as a cofactor.

It localises to the cytoplasm. The catalysed reaction is 7-phospho-2-dehydro-3-deoxy-D-arabino-heptonate = 3-dehydroquinate + phosphate. It participates in metabolic intermediate biosynthesis; chorismate biosynthesis; chorismate from D-erythrose 4-phosphate and phosphoenolpyruvate: step 2/7. Its function is as follows. Catalyzes the conversion of 3-deoxy-D-arabino-heptulosonate 7-phosphate (DAHP) to dehydroquinate (DHQ). The chain is 3-dehydroquinate synthase from Paenarthrobacter aurescens (strain TC1).